Here is a 554-residue protein sequence, read N- to C-terminus: Bifunctional epoxide hydrolase 2 (554 aa).

The segment at 1 to 224 (MALRVAAFDL…KVTGTQFPEA (224 aa)) is phosphatase. Positions 9 and 11 each coordinate Mg(2+). Position 55 is an N6-succinyllysine (lysine 55). A phosphate-binding site is contributed by 123–124 (TN). Lysine 176 carries the N6-acetyllysine; alternate modification. Lysine 176 carries the N6-succinyllysine; alternate modification. Aspartate 185 is a Mg(2+) binding site. Lysine 191 and lysine 215 each carry N6-acetyllysine. Positions 233–554 (NDVSHGYVTV…IQNPSVTSKI (322 aa)) are epoxide hydrolase. The AB hydrolase-1 domain occupies 257 to 530 (PAICLCHGFP…CGHWTQIEKP (274 aa)). Catalysis depends on aspartate 333, which acts as the Nucleophile. Residue serine 368 is modified to Phosphoserine. Tyrosine 381 provides a ligand contact to substrate. Residues lysine 420 and lysine 454 each carry the N6-succinyllysine modification. Catalysis depends on tyrosine 465, which acts as the Proton donor. Residue lysine 504 is modified to N6-succinyllysine. Cysteine 521 is lipidated: S-(15-deoxy-Delta12,14-prostaglandin J2-9-yl)cysteine. Histidine 523 serves as the catalytic Proton acceptor. A Microbody targeting signal motif is present at residues 552-554 (SKI). Position 553 is an N6-succinyllysine (lysine 553).

Belongs to the AB hydrolase superfamily. Epoxide hydrolase family. Homodimer. Requires Mg(2+) as cofactor. In terms of processing, the covalent modification of cysteine by 15-deoxy-Delta12,14-prostaglandin-J2 is autocatalytic and reversible. It may occur as an alternative to other cysteine modifications, such as S-nitrosylation and S-palmitoylation.

The protein localises to the cytoplasm. The protein resides in the peroxisome. It carries out the reaction an epoxide + H2O = an ethanediol. The catalysed reaction is (9S,10S)-10-hydroxy-9-(phosphooxy)octadecanoate + H2O = (9S,10S)-9,10-dihydroxyoctadecanoate + phosphate. It catalyses the reaction 8-hydroxy-(11S,12S)-epoxy-(5Z,9E,14Z)-eicosatrienoate + H2O = (8,11R,12S)-trihydroxy-(5Z,9E,14Z)-eicosatrienoate. The enzyme catalyses 10-hydroxy-(11S,12S)-epoxy- (5Z,8Z,14Z)-eicosatrienoate + H2O = (10,11S,12R)-trihydroxy-(5Z,8Z,14Z)-eicosatrienoate. It carries out the reaction 12-phosphooxy-(9Z)-octadecenoate + H2O = 12-hydroxy-(9Z)-octadecenoate + phosphate. The catalysed reaction is 12-phosphooxy-(9E)-octadecenoate + H2O = 12-hydroxy-(9E)-octadecenoate + phosphate. It catalyses the reaction 12-(phosphooxy)octadecanoate + H2O = 12-hydroxyoctadecanoate + phosphate. The enzyme catalyses 8,9-epoxy-(5Z,11Z,14Z)-eicosatrienoate + H2O = 8,9-dihydroxy-(5Z,11Z,14Z)-eicosatrienoate. It carries out the reaction 11,12-epoxy-(5Z,8Z,14Z)-eicosatrienoate + H2O = 11,12-dihydroxy-(5Z,8Z,14Z)-eicosatrienoate. The catalysed reaction is 14,15-epoxy-(5Z,8Z,11Z)-eicosatrienoate + H2O = 14,15-dihydroxy-(5Z,8Z,11Z)-eicosatrienoate. It catalyses the reaction 9,10-epoxy-(12Z)-octadecenoate + H2O = 9,10-dihydroxy-(12Z)-octadecenoate. The enzyme catalyses 1-tetradecanoyl-sn-glycerol 3-phosphate + H2O = 1-tetradecanoyl-sn-glycerol + phosphate. It carries out the reaction 1-octadecanoyl-sn-glycero-3-phosphate + H2O = 1-octadecanoyl-sn-glycerol + phosphate. The catalysed reaction is 1-(5Z,8Z,11Z,14Z-eicosatetraenoyl)-sn-glycero-3-phosphate + H2O = 1-(5Z,8Z,11Z,14Z-eicosatetraenoyl)-sn-glycerol + phosphate. It catalyses the reaction 1-hexadecanoyl-sn-glycero-3-phosphate + H2O = 1-hexadecanoyl-sn-glycerol + phosphate. The enzyme catalyses 1-(9Z-octadecenoyl)-sn-glycero-3-phosphate + H2O = 1-(9Z-octadecenoyl)-sn-glycerol + phosphate. It carries out the reaction (8S,9R)-epoxy-(5Z,11Z,14Z)-eicosatrienoate + H2O = (8S,9S)-dihydroxy-(5Z,11Z,14Z)-eicosatrienoate. The catalysed reaction is (11S,12R)-epoxy-(5Z,8Z,14Z)-eicosatrienoate + H2O = (11R,12R)-dihydroxy-(5Z,8Z,14Z)-eicosatrienoate. It catalyses the reaction (11S,12R)-epoxy-(5Z,8Z,14Z)-eicosatrienoate + H2O = (11S,12S)-dihydroxy-(5Z,8Z,14Z)-eicosatrienoate. The enzyme catalyses (14S,15R)-epoxy-(5Z,8Z,11Z)-eicosatrienoate + H2O = (14R,15R)-dihydroxy-(5Z,8Z,11Z)-eicosatrienoate. It carries out the reaction (14S,15R)-epoxy-(5Z,8Z,11Z)-eicosatrienoate + H2O = (14S,15S)-dihydroxy-(5Z,8Z,11Z)-eicosatrienoate. The catalysed reaction is (11R,12S)-epoxy-(5Z,8Z,14Z)-eicosatrienoate + H2O = (11S,12S)-dihydroxy-(5Z,8Z,14Z)-eicosatrienoate. It catalyses the reaction (11R,12S)-epoxy-(5Z,8Z,14Z)-eicosatrienoate + H2O = (11R,12R)-dihydroxy-(5Z,8Z,14Z)-eicosatrienoate. The enzyme catalyses (8S,9R)-epoxy-(5Z,11Z,14Z)-eicosatrienoate + H2O = (8R,9R)-dihydroxy-(5Z,11Z,14Z)-eicosatrienoate. It carries out the reaction (14R,15S)-epoxy-(5Z,8Z,11Z)-eicosatrienoate + H2O = (14R,15R)-dihydroxy-(5Z,8Z,11Z)-eicosatrienoate. With respect to regulation, inhibited by 1-(1-acetylpiperidin-4-yl)-3-(4-(trifl uoromethoxy)phenyl)urea (TPAU), 1-cyclohexyl-3-dodecylurea (CDU), 12-(3-adamantan-1-yl-ureido)-dodecanoic acid (AUDA), 1-((3S, 5S, 7S)-adamantan-1-yl)-3-(5-(2-(2-ethoxyethoxy) ethoxy)pentyl)urea (AEPU), N-adamantyl-N[']-cyclohexyl urea (ACU), 4-(((1S, 4S)-4-(3-((3S, 5S, 7S)-adamantan-1-yl) ureido)cyclohexyl)oxy)benzoic acid (c-AUCB), 4-(((1R, 4R)-4-(3-((3S, 5S, 7S)-adamantan-1-yl)ureido)cyclohexyl)oxy)benzoic acid (t-AUCB), 4-(((1R, 4R)-4-(3-(4(trifluoromethoxy)phenyl)ureido)cyclohexyl)oxy)benzoic acid (t-TAUCB) and to a lesser extent by 8-(3-((3S, 5S, 7S)-adamantan-1-yl)ureido) octanoic acid (AUOA). Phosphatase activity is inhibited by dodecyl-phosphate, phospholipids such as phospho-lysophosphatidic acids and fatty acids such as palmitic acid and lauric acid. Functionally, bifunctional enzyme. The C-terminal domain has epoxide hydrolase activity and acts on epoxides (alkene oxides, oxiranes) and arene oxides. Plays a role in xenobiotic metabolism by degrading potentially toxic epoxides. Also determines steady-state levels of physiological mediators. The N-terminal domain has lipid phosphatase activity, with the highest activity towards threo-9,10-phosphonooxy-hydroxy-octadecanoic acid, followed by erythro-9,10-phosphonooxy-hydroxy-octadecanoic acid, 12-phosphonooxy-octadec-9Z-enoic acid and 12-phosphonooxy-octadec-9E-enoic acid. In terms of biological role, bifunctional enzyme. The C-terminal domain has epoxide hydrolase activity and acts on epoxides (alkene oxides, oxiranes) and arene oxides. Plays a role in xenobiotic metabolism by degrading potentially toxic epoxides. Also determines steady-state levels of physiological mediators. Bifunctional enzyme. The N-terminal domain has lipid phosphatase activity, with the highest activity towards threo-9,10-phosphonooxy-hydroxy-octadecanoic acid, followed by erythro-9,10-phosphonooxy-hydroxy-octadecanoic acid, 12-phosphonooxy-octadec-9Z-enoic acid and 12-phosphonooxy-octadec-9E-enoic acid. Has phosphatase activity toward lyso-glycerophospholipids with also some lower activity toward lysolipids of sphingolipid and isoprenoid phosphates. The polypeptide is Bifunctional epoxide hydrolase 2 (Rattus norvegicus (Rat)).